We begin with the raw amino-acid sequence, 75 residues long: Mitotic-spindle organizing protein 1 (75 aa).

It belongs to the MOZART1 family. In terms of assembly, part of the gamma-tubulin complex.

The protein localises to the cytoplasm. The protein resides in the cytoskeleton. It localises to the microtubule organizing center. Its subcellular location is the centrosome. It is found in the spindle. Required for gamma-tubulin complex recruitment to the centrosome. In Danio rerio (Zebrafish), this protein is Mitotic-spindle organizing protein 1 (mzt1).